The following is a 631-amino-acid chain: Serine/threonine-protein kinase PLK3 (631 aa).

The interval 1–59 (MEPAAGFLSPRPFPRAAVPSAPPAGPGPPANASPRSEPEVLAGPRAPDPPGRLITDPLS) is disordered. Over residues 20 to 31 (SAPPAGPGPPAN) the composition is skewed to pro residues. One can recognise a Protein kinase domain in the interval 63–315 (YTKGRLLGKG…IEQILRHDFF (253 aa)). ATP is bound by residues 69 to 77 (LGKGGFARC) and Lys-92. The active-site Proton acceptor is the Asp-186. 2 POLO box domains span residues 448 to 526 (WVSK…YMEQ) and 547 to 630 (LLLQ…DQSP).

Belongs to the protein kinase superfamily. Ser/Thr protein kinase family. CDC5/Polo subfamily. As to quaternary structure, interacts (via the POLO-box domain) with CIB1; leading to inhibit PLK3 kinase activity. Interacts with GOLGB1. In terms of processing, phosphorylated in an ATM-dependent manner following DNA damage. Phosphorylated as cells enter mitosis and dephosphorylated as cells exit mitosis. In terms of tissue distribution, expressed in skin.

The protein resides in the cytoplasm. It is found in the nucleus. It localises to the nucleolus. Its subcellular location is the golgi apparatus. The protein localises to the cytoskeleton. The protein resides in the microtubule organizing center. It is found in the centrosome. The catalysed reaction is L-seryl-[protein] + ATP = O-phospho-L-seryl-[protein] + ADP + H(+). The enzyme catalyses L-threonyl-[protein] + ATP = O-phospho-L-threonyl-[protein] + ADP + H(+). Serine/threonine-protein kinase involved in cell cycle regulation, response to stress and Golgi disassembly. Polo-like kinases act by binding and phosphorylating proteins that are already phosphorylated on a specific motif recognized by the POLO box domains. Phosphorylates ATF2, BCL2L1, CDC25A, CDC25C, CHEK2, HIF1A, JUN, p53/TP53, p73/TP73, PTEN, TOP2A and VRK1. Involved in cell cycle regulation: required for entry into S phase and cytokinesis. Phosphorylates BCL2L1, leading to regulate the G2 checkpoint and progression to cytokinesis during mitosis. Plays a key role in response to stress: rapidly activated upon stress stimulation, such as ionizing radiation, reactive oxygen species (ROS), hyperosmotic stress, UV irradiation and hypoxia. Involved in DNA damage response and G1/S transition checkpoint by phosphorylating CDC25A, p53/TP53 and p73/TP73. Phosphorylates p53/TP53 in response to reactive oxygen species (ROS), thereby promoting p53/TP53-mediated apoptosis. Phosphorylates CHEK2 in response to DNA damage, promoting the G2/M transition checkpoint. Phosphorylates the transcription factor p73/TP73 in response to DNA damage, leading to inhibit p73/TP73-mediated transcriptional activation and pro-apoptotic functions. Phosphorylates HIF1A and JUN is response to hypoxia. Phosphorylates ATF2 following hyperosmotic stress in corneal epithelium. Also involved in Golgi disassembly during the cell cycle: part of a MEK1/MAP2K1-dependent pathway that induces Golgi fragmentation during mitosis by mediating phosphorylation of VRK1. May participate in endomitotic cell cycle, a form of mitosis in which both karyokinesis and cytokinesis are interrupted and is a hallmark of megakaryocyte differentiation, via its interaction with CIB1. This is Serine/threonine-protein kinase PLK3 (Plk3) from Mus musculus (Mouse).